The sequence spans 293 residues: 4-hydroxy-tetrahydrodipicolinate synthase (293 aa).

T44 lines the pyruvate pocket. Y132 acts as the Proton donor/acceptor in catalysis. The active-site Schiff-base intermediate with substrate is K161. I203 contributes to the pyruvate binding site.

The protein belongs to the DapA family. Homotetramer; dimer of dimers.

It localises to the cytoplasm. The enzyme catalyses L-aspartate 4-semialdehyde + pyruvate = (2S,4S)-4-hydroxy-2,3,4,5-tetrahydrodipicolinate + H2O + H(+). The protein operates within amino-acid biosynthesis; L-lysine biosynthesis via DAP pathway; (S)-tetrahydrodipicolinate from L-aspartate: step 3/4. In terms of biological role, catalyzes the condensation of (S)-aspartate-beta-semialdehyde [(S)-ASA] and pyruvate to 4-hydroxy-tetrahydrodipicolinate (HTPA). The sequence is that of 4-hydroxy-tetrahydrodipicolinate synthase from Persephonella marina (strain DSM 14350 / EX-H1).